The primary structure comprises 469 residues: Adenosylhomocysteinase (469 aa).

T63, D139, and E164 together coordinate substrate. 165-167 (TTT) lines the NAD(+) pocket. Residues K194 and D198 each contribute to the substrate site. NAD(+) is bound by residues N199, 228–233 (GYGDVG), E251, N300, 321–323 (IGH), and N375.

The protein belongs to the adenosylhomocysteinase family. It depends on NAD(+) as a cofactor.

It is found in the cytoplasm. It catalyses the reaction S-adenosyl-L-homocysteine + H2O = L-homocysteine + adenosine. It participates in amino-acid biosynthesis; L-homocysteine biosynthesis; L-homocysteine from S-adenosyl-L-homocysteine: step 1/1. May play a key role in the regulation of the intracellular concentration of adenosylhomocysteine. This is Adenosylhomocysteinase from Pseudomonas fluorescens (strain ATCC BAA-477 / NRRL B-23932 / Pf-5).